A 359-amino-acid polypeptide reads, in one-letter code: MAP kinase-activated protein kinase 2 (359 aa).

The 262-residue stretch at 20–281 (VTSNTVLGYG…IQDVISNKWI (262 aa)) folds into the Protein kinase domain. ATP is bound by residues 26–34 (LGYGINGKV) and Lys49. Asp142 acts as the Proton acceptor in catalysis.

Belongs to the protein kinase superfamily. CAMK Ser/Thr protein kinase family. Post-translationally, phosphorylated and activated by MAP kinase.

It catalyses the reaction L-seryl-[protein] + ATP = O-phospho-L-seryl-[protein] + ADP + H(+). The enzyme catalyses L-threonyl-[protein] + ATP = O-phospho-L-threonyl-[protein] + ADP + H(+). Functionally, its physiological substrate seems to be the small heat shock protein (HSP27/HSP25). The sequence is that of MAP kinase-activated protein kinase 2 (MAPk-Ak2) from Drosophila melanogaster (Fruit fly).